The primary structure comprises 512 residues: MVSKLDKYWQHPALYWPLLILFAAATPFTFAPYYHFWLMPLIFGAFVRLIELRPRFAVSSAYLFGLTAYTTQFYWIHTALHDVSGLPDLYAVPLTFLLPAYLALYPALCFWLWKKFTLPRGIKIGLVLPILWTLTEFARERFLTGFGWGAIGYSQITPDSPLAGFAPFGGIHMVTLATAFLGVWLVLASDNTARSGKRLLPIILIAALLAAGYTARQTDFTRPDGSRSTVALLQGNIDQTLKWREDQVIPTIQKYYEQVGKTTADIVILPETAIPVMRQNLPENILAKFAEQAQNNGSALAVGISQYTSDGNGYENAVINLTGYQENNQDGIPYYAKNHLVPFGEYKPLPFLTTPLYKMMNMPLSDFRKGGGKQSALLMKNQKIAFNICYEDGFGDELIAAAKDATLLANASNMAWYGKSNAMYQHLQQSQARAMELGRYMVRATNTGATAIISPKGNIIAQAQPDTETVLEGHIKGYVGETPYMKTGSSWWLMGILTLAALILFIFRNKEH.

A run of 6 helical transmembrane segments spans residues 5–25, 56–76, 92–112, 118–138, 168–188, and 195–215; these read LDKY…FAAA, FAVS…FYWI, VPLT…CFWL, LPRG…TEFA, FGGI…LVLA, and SGKR…GYTA. Positions 233–477 constitute a CN hydrolase domain; the sequence is LQGNIDQTLK…ETVLEGHIKG (245 aa). Residue E271 is the Proton acceptor of the active site. K337 is an active-site residue. C389 (nucleophile) is an active-site residue. Residues 487–507 form a helical membrane-spanning segment; that stretch reads TGSSWWLMGILTLAALILFIF.

Belongs to the CN hydrolase family. Apolipoprotein N-acyltransferase subfamily.

It localises to the cell inner membrane. The catalysed reaction is N-terminal S-1,2-diacyl-sn-glyceryl-L-cysteinyl-[lipoprotein] + a glycerophospholipid = N-acyl-S-1,2-diacyl-sn-glyceryl-L-cysteinyl-[lipoprotein] + a 2-acyl-sn-glycero-3-phospholipid + H(+). It participates in protein modification; lipoprotein biosynthesis (N-acyl transfer). Functionally, catalyzes the phospholipid dependent N-acylation of the N-terminal cysteine of apolipoprotein, the last step in lipoprotein maturation. The chain is Apolipoprotein N-acyltransferase from Neisseria meningitidis serogroup A / serotype 4A (strain DSM 15465 / Z2491).